The following is a 224-amino-acid chain: Uracil-DNA glycosylase (224 aa).

Residue Asp64 is the Proton acceptor of the active site.

This sequence belongs to the uracil-DNA glycosylase (UDG) superfamily. UNG family.

The protein localises to the cytoplasm. The catalysed reaction is Hydrolyzes single-stranded DNA or mismatched double-stranded DNA and polynucleotides, releasing free uracil.. Excises uracil residues from the DNA which can arise as a result of misincorporation of dUMP residues by DNA polymerase or due to deamination of cytosine. The chain is Uracil-DNA glycosylase from Geobacillus sp. (strain WCH70).